Reading from the N-terminus, the 204-residue chain is High frequency lysogenization protein HflD homolog (204 aa).

Belongs to the HflD family.

The protein localises to the cytoplasm. Its subcellular location is the cell inner membrane. In Shewanella woodyi (strain ATCC 51908 / MS32), this protein is High frequency lysogenization protein HflD homolog.